The primary structure comprises 497 residues: ATP synthase subunit alpha 2 (497 aa).

167 to 174 (GERATGKT) serves as a coordination point for ATP.

It belongs to the ATPase alpha/beta chains family. F-type ATPases have 2 components, CF(1) - the catalytic core - and CF(0) - the membrane proton channel. CF(1) has five subunits: alpha(3), beta(3), gamma(1), delta(1), epsilon(1). CF(0) has four main subunits: a(1), b(1), b'(1) and c(9-12).

It is found in the cell inner membrane. It catalyses the reaction ATP + H2O + 4 H(+)(in) = ADP + phosphate + 5 H(+)(out). Its function is as follows. Produces ATP from ADP in the presence of a proton gradient across the membrane. The alpha chain is a regulatory subunit. The chain is ATP synthase subunit alpha 2 from Cereibacter sphaeroides (strain ATCC 17029 / ATH 2.4.9) (Rhodobacter sphaeroides).